Consider the following 1279-residue polypeptide: Myosin-1 (1279 aa).

The segment covering 1 to 12 (MAIVKRGGRTRA) has biased composition (basic residues). Residues 1 to 25 (MAIVKRGGRTRAKQQQAPAKVNNGL) form a disordered region. Residues 48–736 (VGVSDLTLLS…TLFALEDMRD (689 aa)) form the Myosin motor domain. Residue 141 to 148 (GESGAGKT) coordinates ATP. Serine 371 carries the phosphoserine modification. Residues 419–502 (SIGILDIYGF…PGLFAALNDS (84 aa)) form an actin-binding region. IQ domains follow at residues 740 to 760 (HNMA…KEDA) and 761 to 786 (AKTI…YGNS). A TH1 domain is found at 794–984 (RRRFSMLGSR…SGTVTVNQGL (191 aa)). Composition is skewed to polar residues over residues 980–989 (VNQGLPPTSK) and 1018–1027 (AFQSQPTASY). 4 disordered regions span residues 980–1001 (VNQG…LGKV), 1014–1132 (LAQP…PKHP), 1189–1216 (SPSA…SSNT), and 1253–1279 (LADA…DDDW). Composition is skewed to low complexity over residues 1038–1056 (TQLY…PTRT) and 1067–1095 (STQT…KKIA). Residues 1116–1126 (APPPPPPPPAL) show a composition bias toward pro residues. The region spanning 1129–1189 (PKHPTYRAMY…PIDYLQEESS (61 aa)) is the SH3 domain. Over residues 1189–1209 (SPSASAATQSYAPTTASSNPV) the composition is skewed to polar residues. The segment covering 1268–1279 (SDAEDDDDDDDW) has biased composition (acidic residues).

The protein belongs to the TRAFAC class myosin-kinesin ATPase superfamily. Myosin family. In terms of processing, phosphorylation of the TEDS site (Ser-371) is required for the polarization of the actin cytoskeleton. Phosphorylation probably activates the myosin-I ATPase activity.

The protein resides in the cytoplasm. Its subcellular location is the cytoskeleton. It is found in the actin patch. Its function is as follows. Type-I myosin implicated in the organization of the actin cytoskeleton. Required for proper actin cytoskeleton polarization. At the cell cortex, assembles in patch-like structures together with proteins from the actin-polymerizing machinery and promotes actin assembly. Functions as actin nucleation-promoting factor (NPF) for the Arp2/3 complex. The sequence is that of Myosin-1 (MYO1) from Lodderomyces elongisporus (strain ATCC 11503 / CBS 2605 / JCM 1781 / NBRC 1676 / NRRL YB-4239) (Yeast).